Here is a 183-residue protein sequence, read N- to C-terminus: Orotate phosphoribosyltransferase (183 aa).

5-phospho-alpha-D-ribose 1-diphosphate is bound by residues Arg-21, Lys-88, and 112–120 (EDVVTTGES). Orotate is bound by residues Thr-116 and Arg-144.

It belongs to the purine/pyrimidine phosphoribosyltransferase family. PyrE subfamily. Homodimer. The cofactor is Mg(2+).

The enzyme catalyses orotidine 5'-phosphate + diphosphate = orotate + 5-phospho-alpha-D-ribose 1-diphosphate. It functions in the pathway pyrimidine metabolism; UMP biosynthesis via de novo pathway; UMP from orotate: step 1/2. Its function is as follows. Catalyzes the transfer of a ribosyl phosphate group from 5-phosphoribose 1-diphosphate to orotate, leading to the formation of orotidine monophosphate (OMP). In Thermus thermophilus (strain ATCC BAA-163 / DSM 7039 / HB27), this protein is Orotate phosphoribosyltransferase.